A 109-amino-acid chain; its full sequence is Large ribosomal subunit protein uL22 (109 aa).

It belongs to the universal ribosomal protein uL22 family. Part of the 50S ribosomal subunit.

Its function is as follows. This protein binds specifically to 23S rRNA; its binding is stimulated by other ribosomal proteins, e.g. L4, L17, and L20. It is important during the early stages of 50S assembly. It makes multiple contacts with different domains of the 23S rRNA in the assembled 50S subunit and ribosome. Functionally, the globular domain of the protein is located near the polypeptide exit tunnel on the outside of the subunit, while an extended beta-hairpin is found that lines the wall of the exit tunnel in the center of the 70S ribosome. In Polaromonas sp. (strain JS666 / ATCC BAA-500), this protein is Large ribosomal subunit protein uL22.